A 64-amino-acid polypeptide reads, in one-letter code: MRSVALTLCAIIAGYLLVSNLQNVFSPEVCTLVITGESIRINGCNLSPAHFRAISHLKVLQIHL.

Topologically, residues 1–4 (MRSV) are lumenal. A helical transmembrane segment spans residues 5–27 (ALTLCAIIAGYLLVSNLQNVFSP). Residues 28–64 (EVCTLVITGESIRINGCNLSPAHFRAISHLKVLQIHL) are Cytoplasmic-facing.

This sequence belongs to the Tymovirales TGBp3 protein family.

The protein resides in the host endoplasmic reticulum membrane. Plays a role in viral cell-to-cell propagation, by facilitating genome transport to neighboring plant cells through plasmosdesmata. May induce the formation of granular vesicles derived from the Endoplasmic reticulum, which align on actin filaments. This Lily symptomless virus (LSV) protein is Movement protein TGBp3.